The following is a 102-amino-acid chain: NADH-quinone oxidoreductase subunit K 1 (102 aa).

Transmembrane regions (helical) follow at residues 5–25 (LYEV…CVVA), 30–50 (VIMM…TFVG), and 62–82 (VFSL…LAMV).

The protein belongs to the complex I subunit 4L family. As to quaternary structure, NDH-1 is composed of 14 different subunits. Subunits NuoA, H, J, K, L, M, N constitute the membrane sector of the complex.

Its subcellular location is the cell inner membrane. It catalyses the reaction a quinone + NADH + 5 H(+)(in) = a quinol + NAD(+) + 4 H(+)(out). In terms of biological role, NDH-1 shuttles electrons from NADH, via FMN and iron-sulfur (Fe-S) centers, to quinones in the respiratory chain. The immediate electron acceptor for the enzyme in this species is believed to be ubiquinone. Couples the redox reaction to proton translocation (for every two electrons transferred, four hydrogen ions are translocated across the cytoplasmic membrane), and thus conserves the redox energy in a proton gradient. The polypeptide is NADH-quinone oxidoreductase subunit K 1 (Geobacter sp. (strain M21)).